The chain runs to 225 residues: uncharacterized protein (225 aa).

A divalent metal cation contacts are provided by glutamate 69, glutamate 71, and aspartate 100.

It belongs to the FAH family.

This is an uncharacterized protein from Pyrococcus abyssi (strain GE5 / Orsay).